Consider the following 176-residue polypeptide: Translation initiation factor IF-3 (176 aa).

This sequence belongs to the IF-3 family. In terms of assembly, monomer.

It is found in the cytoplasm. In terms of biological role, IF-3 binds to the 30S ribosomal subunit and shifts the equilibrium between 70S ribosomes and their 50S and 30S subunits in favor of the free subunits, thus enhancing the availability of 30S subunits on which protein synthesis initiation begins. In Streptococcus equi subsp. zooepidemicus (strain H70), this protein is Translation initiation factor IF-3.